The following is a 232-amino-acid chain: Ubiquinone biosynthesis O-methyltransferase (232 aa).

S-adenosyl-L-methionine contacts are provided by arginine 36, glycine 55, aspartate 76, and leucine 120.

This sequence belongs to the methyltransferase superfamily. UbiG/COQ3 family.

It carries out the reaction a 3-demethylubiquinol + S-adenosyl-L-methionine = a ubiquinol + S-adenosyl-L-homocysteine + H(+). The enzyme catalyses a 3-(all-trans-polyprenyl)benzene-1,2-diol + S-adenosyl-L-methionine = a 2-methoxy-6-(all-trans-polyprenyl)phenol + S-adenosyl-L-homocysteine + H(+). It participates in cofactor biosynthesis; ubiquinone biosynthesis. Its function is as follows. O-methyltransferase that catalyzes the 2 O-methylation steps in the ubiquinone biosynthetic pathway. The sequence is that of Ubiquinone biosynthesis O-methyltransferase from Pseudomonas syringae pv. tomato (strain ATCC BAA-871 / DC3000).